Here is a 66-residue protein sequence, read N- to C-terminus: Small ribosomal subunit protein bS21 (66 aa).

Belongs to the bacterial ribosomal protein bS21 family.

The chain is Small ribosomal subunit protein bS21 from Rickettsia peacockii (strain Rustic).